Here is a 551-residue protein sequence, read N- to C-terminus: Serendipity locus protein alpha (551 aa).

It is found in the cytoplasm. The protein localises to the cell membrane. In terms of biological role, required for the cellularization of the syncytial blastoderm embryo. Involved in the localization of the actin filaments just prior to and during plasma membrane invagination. Sry-alpha together with nullo and bnk may provide auxiliary functions, by acting both to stabilize a large and dynamic microfilament structure and regulate its functions. The polypeptide is Serendipity locus protein alpha (Sry-alpha) (Drosophila pseudoobscura pseudoobscura (Fruit fly)).